Consider the following 92-residue polypeptide: Small ribosomal subunit protein uS19 (92 aa).

The protein belongs to the universal ribosomal protein uS19 family.

Functionally, protein S19 forms a complex with S13 that binds strongly to the 16S ribosomal RNA. This chain is Small ribosomal subunit protein uS19, found in Nostoc sp. (strain PCC 7120 / SAG 25.82 / UTEX 2576).